We begin with the raw amino-acid sequence, 189 residues long: Chitin synthase 1 (189 aa).

Belongs to the chitin synthase family.

It is found in the cell membrane. It carries out the reaction [(1-&gt;4)-N-acetyl-beta-D-glucosaminyl](n) + UDP-N-acetyl-alpha-D-glucosamine = [(1-&gt;4)-N-acetyl-beta-D-glucosaminyl](n+1) + UDP + H(+). Functionally, polymerizes chitin, a structural polymer of the cell wall and septum, by transferring the sugar moiety of UDP-GlcNAc to the non-reducing end of the growing chitin polymer. This chain is Chitin synthase 1 (CHS1), found in Xylohypha bantiana.